The following is a 150-amino-acid chain: D-aminoacyl-tRNA deacylase (150 aa).

The short motif at 136-137 is the Gly-cisPro motif, important for rejection of L-amino acids element; that stretch reads GP.

Belongs to the DTD family. In terms of assembly, homodimer.

Its subcellular location is the cytoplasm. It catalyses the reaction glycyl-tRNA(Ala) + H2O = tRNA(Ala) + glycine + H(+). It carries out the reaction a D-aminoacyl-tRNA + H2O = a tRNA + a D-alpha-amino acid + H(+). In terms of biological role, an aminoacyl-tRNA editing enzyme that deacylates mischarged D-aminoacyl-tRNAs. Also deacylates mischarged glycyl-tRNA(Ala), protecting cells against glycine mischarging by AlaRS. Acts via tRNA-based rather than protein-based catalysis; rejects L-amino acids rather than detecting D-amino acids in the active site. By recycling D-aminoacyl-tRNA to D-amino acids and free tRNA molecules, this enzyme counteracts the toxicity associated with the formation of D-aminoacyl-tRNA entities in vivo and helps enforce protein L-homochirality. In Staphylococcus haemolyticus (strain JCSC1435), this protein is D-aminoacyl-tRNA deacylase.